A 682-amino-acid chain; its full sequence is uncharacterized protein (682 aa).

Positions 284–487 (VVNILADRLI…KDKDIAEYIV (204 aa)) constitute an MCM domain. An ATP-binding site is contributed by 329-336 (TDPGIGKT).

It belongs to the MCM family.

This is an uncharacterized protein from Methanocaldococcus jannaschii (strain ATCC 43067 / DSM 2661 / JAL-1 / JCM 10045 / NBRC 100440) (Methanococcus jannaschii).